We begin with the raw amino-acid sequence, 215 residues long: Ribosomal RNA small subunit methyltransferase G (215 aa).

S-adenosyl-L-methionine-binding positions include G77, F82, 130 to 131, and R146; that span reads IE.

This sequence belongs to the methyltransferase superfamily. RNA methyltransferase RsmG family.

The protein resides in the cytoplasm. It carries out the reaction guanosine(527) in 16S rRNA + S-adenosyl-L-methionine = N(7)-methylguanosine(527) in 16S rRNA + S-adenosyl-L-homocysteine. Its function is as follows. Specifically methylates the N7 position of guanine in position 527 of 16S rRNA. This chain is Ribosomal RNA small subunit methyltransferase G, found in Bartonella quintana (strain Toulouse) (Rochalimaea quintana).